Here is a 297-residue protein sequence, read N- to C-terminus: UDP-N-acetylglucosamine transporter TMEM241 (297 aa).

The next 10 membrane-spanning stretches (helical) occupy residues Leu7 to Val29, Phe32 to Met52, Val69 to Ala89, Leu93 to Gln113, Thr121 to Phe141, Phe146 to Ile166, Ile187 to Leu207, Phe211 to Leu231, Trp250 to Leu270, and Thr271 to Ser291.

It belongs to the nucleotide-sugar transporter family. SLC35A subfamily. Widely expressed with high expression in lung.

It localises to the golgi apparatus. The protein resides in the cis-Golgi network membrane. Its function is as follows. Golgi-localized UDP-N-acetylglucosamine (UDP-GlcNAc) transporter that transports UDP-N-acetylglucosamine into Golgi lumen. Contributes to lysosomal targeting of NPC2, a key protein required for lysosomal cholesterol exiting, and that utilizes the mannose-6-phosphate (M6P) modification pathway for its lysosomal targeting. The chain is UDP-N-acetylglucosamine transporter TMEM241 (Tmem241) from Mus musculus (Mouse).